The sequence spans 116 residues: Ribosome-binding factor A (116 aa).

Belongs to the RbfA family. In terms of assembly, monomer. Binds 30S ribosomal subunits, but not 50S ribosomal subunits or 70S ribosomes.

The protein localises to the cytoplasm. Functionally, one of several proteins that assist in the late maturation steps of the functional core of the 30S ribosomal subunit. Associates with free 30S ribosomal subunits (but not with 30S subunits that are part of 70S ribosomes or polysomes). Required for efficient processing of 16S rRNA. May interact with the 5'-terminal helix region of 16S rRNA. In Streptococcus pneumoniae (strain Hungary19A-6), this protein is Ribosome-binding factor A.